The primary structure comprises 204 residues: Tat proofreading chaperone DmsD (204 aa).

This sequence belongs to the TorD/DmsD family. DmsD subfamily. Monomer in solution.

Its function is as follows. Required for biogenesis/assembly of DMSO reductase, but not for the interaction of the DmsA signal peptide with the Tat system. May be part of a chaperone cascade complex that facilitates a folding-maturation pathway for the substrate protein. The sequence is that of Tat proofreading chaperone DmsD from Salmonella typhimurium (strain LT2 / SGSC1412 / ATCC 700720).